The following is a 426-amino-acid chain: Glutamate-1-semialdehyde 2,1-aminomutase (426 aa).

Lys-265 carries the N6-(pyridoxal phosphate)lysine modification.

The protein belongs to the class-III pyridoxal-phosphate-dependent aminotransferase family. HemL subfamily. In terms of assembly, homodimer. It depends on pyridoxal 5'-phosphate as a cofactor.

The protein localises to the cytoplasm. It carries out the reaction (S)-4-amino-5-oxopentanoate = 5-aminolevulinate. The protein operates within porphyrin-containing compound metabolism; protoporphyrin-IX biosynthesis; 5-aminolevulinate from L-glutamyl-tRNA(Glu): step 2/2. The polypeptide is Glutamate-1-semialdehyde 2,1-aminomutase (Escherichia coli O157:H7).